We begin with the raw amino-acid sequence, 209 residues long: Uridine kinase (209 aa).

12–19 (GGSGSGKT) provides a ligand contact to ATP.

It belongs to the uridine kinase family.

It is found in the cytoplasm. It carries out the reaction uridine + ATP = UMP + ADP + H(+). It catalyses the reaction cytidine + ATP = CMP + ADP + H(+). Its pathway is pyrimidine metabolism; CTP biosynthesis via salvage pathway; CTP from cytidine: step 1/3. It functions in the pathway pyrimidine metabolism; UMP biosynthesis via salvage pathway; UMP from uridine: step 1/1. This is Uridine kinase from Listeria monocytogenes serotype 4b (strain CLIP80459).